We begin with the raw amino-acid sequence, 320 residues long: Malate dehydrogenase (320 aa).

NAD(+) is bound by residues 10–15 (GAGQIG) and Asp34. Arg83 and Arg89 together coordinate substrate. Residues Asn96 and 119-121 (ITN) contribute to the NAD(+) site. Asn121 and Arg152 together coordinate substrate. His176 functions as the Proton acceptor in the catalytic mechanism.

It belongs to the LDH/MDH superfamily. MDH type 3 family.

It carries out the reaction (S)-malate + NAD(+) = oxaloacetate + NADH + H(+). Catalyzes the reversible oxidation of malate to oxaloacetate. The chain is Malate dehydrogenase from Methylorubrum extorquens (strain CM4 / NCIMB 13688) (Methylobacterium extorquens).